The primary structure comprises 600 residues: Adenine deaminase (600 aa).

Belongs to the metallo-dependent hydrolases superfamily. Adenine deaminase family. Mn(2+) is required as a cofactor.

It catalyses the reaction adenine + H2O + H(+) = hypoxanthine + NH4(+). This is Adenine deaminase from Roseobacter denitrificans (strain ATCC 33942 / OCh 114) (Erythrobacter sp. (strain OCh 114)).